Reading from the N-terminus, the 386-residue chain is Acetylornithine aminotransferase (386 aa).

Pyridoxal 5'-phosphate-binding positions include 96-97 (GA) and Phe123. N(2)-acetyl-L-ornithine is bound at residue Arg126. Pyridoxal 5'-phosphate is bound at residue 208 to 211 (DEVQ). Residue Lys237 is modified to N6-(pyridoxal phosphate)lysine. N(2)-acetyl-L-ornithine is bound at residue Ser265. Pyridoxal 5'-phosphate is bound at residue Thr266.

The protein belongs to the class-III pyridoxal-phosphate-dependent aminotransferase family. ArgD subfamily. In terms of assembly, homodimer. The cofactor is pyridoxal 5'-phosphate.

The protein localises to the cytoplasm. The enzyme catalyses N(2)-acetyl-L-ornithine + 2-oxoglutarate = N-acetyl-L-glutamate 5-semialdehyde + L-glutamate. Its pathway is amino-acid biosynthesis; L-arginine biosynthesis; N(2)-acetyl-L-ornithine from L-glutamate: step 4/4. In Bacillus anthracis, this protein is Acetylornithine aminotransferase.